The sequence spans 286 residues: Neuferricin homolog (286 aa).

The signal sequence occupies residues 1–23 (MFGFVKYLFKLQFLFILAAVLAG). The region spanning 61-145 (ATVLTSAELS…KPNDLLGLAN (85 aa)) is the Cytochrome b5 heme-binding domain. Positions 176 to 200 (HKYLALLEQAQIAKAEVDELRSKYP) form a coiled coil.

This sequence belongs to the cytochrome b5 family. MAPR subfamily.

It localises to the secreted. Its function is as follows. Heme-binding protein. The sequence is that of Neuferricin homolog from Drosophila pseudoobscura pseudoobscura (Fruit fly).